The primary structure comprises 594 residues: Kelch domain-containing protein 7B (594 aa).

Residues 1–174 form a disordered region; sequence MVLRSHPFPR…PAGRSGALTE (174 aa). Gly residues predominate over residues 49–58; that stretch reads IGTGTGGLVE. Residues 64-74 show a composition bias toward polar residues; it reads QPRSSETNGSP. Residues 104 to 115 are compositionally biased toward pro residues; the sequence is PAQPPAQRPPGP. A compositionally biased stretch (low complexity) spans 116–126; that stretch reads AASSSARRSQP. 5 Kelch repeats span residues 306–354, 355–405, 406–448, 451–493, and 495–538; these read EEPP…TMHN, YLFL…ALDG, LLYA…AVAC, DIYV…ALGG, and LYRF…TTLG.

In Homo sapiens (Human), this protein is Kelch domain-containing protein 7B (KLHDC7B).